We begin with the raw amino-acid sequence, 305 residues long: Tetraspanin-12 (305 aa).

At 1–12 (MAREDSVKCLRC) the chain is on the cytoplasmic side. Residues Cys-9 and Cys-12 are each lipidated (S-palmitoyl cysteine). The helical transmembrane segment at 13–33 (LLYALNLLFWLMSISVLAVSA) threads the bilayer. The Extracellular segment spans residues 34-59 (WMRDYLNNVLTLTAETRVEEAVILTY). Residues 60-80 (FPVVHPVMIAVCCFLIIVGML) form a helical membrane-spanning segment. Over 81–89 (GYCGTVKRN) the chain is Cytoplasmic. Cys-83 is lipidated: S-palmitoyl cysteine. Residues 90–110 (LLLLAWYFGSLLVIFCVELAC) form a helical membrane-spanning segment. Residues 111–224 (GVWTYEQELM…RGTKQLQVLR (114 aa)) are Extracellular-facing. Residues 225–245 (FLGISIGVTQILAMILTITLL) traverse the membrane as a helical segment. The Cytoplasmic segment spans residues 246–305 (WALYYDRREPGTDQMMSLKNDNSQHLSCPSVELLKPSLSRIFEHTSMANSFNTHFEMEEL).

The protein belongs to the tetraspanin (TM4SF) family. As to quaternary structure, component of a complex, at least composed of TSPAN12, FZD4 and norrin (NDP). Interacts (when palmitoylated) with ADAM10. Interacts with MMP14/MT1-MMP. Palmitoylated; required for interaction with ADAM10. The precise position of palmitoylated residues is unclear and occurs either on Cys-9, Cys-12 and/or Cys-83.

It is found in the cell membrane. In terms of biological role, regulator of cell surface receptor signal transduction. Plays a central role in retinal vascularization by regulating norrin (NDP) signal transduction. Acts in concert with norrin (NDP) to promote FZD4 multimerization and subsequent activation of FZD4, leading to promote accumulation of beta-catenin (CTNNB1) and stimulate LEF/TCF-mediated transcriptional programs. Suprisingly, it only activates the norrin (NDP)-dependent activation of FZD4, while it does not activate the Wnt-dependent activation of FZD4, suggesting the existence of a Wnt-independent signaling that also promote accumulation the beta-catenin (CTNNB1). Acts as a regulator of membrane proteinases such as ADAM10 and MMP14/MT1-MMP. Activates ADAM10-dependent cleavage activity of amyloid precursor protein (APP). Activates MMP14/MT1-MMP-dependent cleavage activity. The sequence is that of Tetraspanin-12 (TSPAN12) from Homo sapiens (Human).